The chain runs to 338 residues: MKRMIALDGAQGEGGGQILRAALSLSMITGQPFTITSIRAGRAKPGLLRQHLTAVKAAAEICRATVEGAELGSQRLVFRPGAVRGGEYRFAIGSAGSCTLVLQTVLPALWFADGPSRVEVSGGTDNPSAPPADFIRRVLEPLLAKIGIHQQTTLLRHGFYPAGGGVVATEVSPVASFNTLQLGERGNIVQMRGEVLLAGVPRHVAEREIATLAGSFSLHEQNIHNLPRDQGPGNTVSLEVESENITERFFVVGEKRVSAEVVAAQLVKEVKRYLASPAAVGEYLADQLVLPMALAGAGEFTVAHPSCHLLTNIAVVERFLPVRFGLIETDGVTRVSIE.

ATP is bound by residues glutamine 103 and 283 to 287 (YLADQ). Histidine 308 serves as the catalytic Tele-AMP-histidine intermediate.

This sequence belongs to the RNA 3'-terminal cyclase family. Type 1 subfamily.

It localises to the cytoplasm. The enzyme catalyses a 3'-end 3'-phospho-ribonucleotide-RNA + ATP = a 3'-end 2',3'-cyclophospho-ribonucleotide-RNA + AMP + diphosphate. Functionally, catalyzes the conversion of 3'-phosphate to a 2',3'-cyclic phosphodiester at the end of RNA. The mechanism of action of the enzyme occurs in 3 steps: (A) adenylation of the enzyme by ATP; (B) transfer of adenylate to an RNA-N3'P to produce RNA-N3'PP5'A; (C) and attack of the adjacent 2'-hydroxyl on the 3'-phosphorus in the diester linkage to produce the cyclic end product. The biological role of this enzyme is unknown but it is likely to function in some aspects of cellular RNA processing. This chain is RNA 3'-terminal phosphate cyclase, found in Shigella boydii serotype 18 (strain CDC 3083-94 / BS512).